The chain runs to 508 residues: Early growth response protein 1 (508 aa).

Disordered regions lie at residues 18–78 (PQFL…ESFS) and 136–210 (MTNP…QYPP). Low complexity predominate over residues 33-42 (NNSSSSSSSS). Residues 43–52 (SGGGGGGGSN) show a composition bias toward gly residues. The span at 139-164 (PPTSSSSAPSPAASSSSSASQSPPLS) shows a compositional bias: low complexity. Lysine 278 is covalently cross-linked (Glycyl lysine isopeptide (Lys-Gly) (interchain with G-Cter in SUMO2)). The interval 292–311 (SRMRKYPNRPSKTPPHERPY) is disordered. 3 consecutive C2H2-type zinc fingers follow at residues 311–335 (YACPVESCDRRFSRSDELTRHIRIH), 341–363 (FQCRICMRNFSRSDHLTTHIRTH), and 369–391 (FACDICGRKFARSDERKRHTKIH). Residues 382-453 (DERKRHTKIH…SSTYPSPAHS (72 aa)) form a disordered region. Residues 386–396 (RHTKIHLRQKD) are compositionally biased toward basic residues. A compositionally biased stretch (low complexity) spans 402–450 (SVVASSAASSLSSYPSPVATSYPSPATTSFPSPVPTSYSSPGSSTYPSP). Tandem repeats lie at residues 413-420 (SSYPSPVA), 421-428 (TSYPSPAT), 429-436 (TSFPSPVP), 437-444 (TSYSSPGS), 445-452 (STYPSPAH), 453-460 (SGFPSPSV), and 462-468 (TTYASVP). Residues 413-468 (SSYPSPVATSYPSPATTSFPSPVPTSYSSPGSSTYPSPAHSGFPSPSVATTYASVP) form a 7 X 8 AA tandem repeats of [TS](2)-[FY]-[PS]-S-P-[GSAV]-X region.

It belongs to the EGR C2H2-type zinc-finger protein family. As to quaternary structure, interacts with SNAI1 and SP1 upon 12-O-tetradecanoylphorbol-13-acetate (TPA) induction. Detected in kidney thick ascending limbs and collecting ducts (at protein level).

The protein localises to the nucleus. The protein resides in the cytoplasm. In terms of biological role, transcriptional regulator. Recognizes and binds to the DNA sequence 5'-GCG(T/G)GGGCG-3'(EGR-site) in the promoter region of target genes. Binds double-stranded target DNA, irrespective of the cytosine methylation status. Regulates the transcription of numerous target genes, and thereby plays an important role in regulating the response to growth factors, DNA damage, and ischemia. Plays a role in the regulation of cell survival, proliferation and cell death. Activates expression of p53/TP53 and TGFB1, and thereby helps prevent tumor formation. Required for normal progress through mitosis and normal proliferation of hepatocytes after partial hepatectomy. Mediates responses to ischemia and hypoxia; regulates the expression of proteins such as IL1B and CXCL2 that are involved in inflammatory processes and development of tissue damage after ischemia. Regulates biosynthesis of luteinizing hormone (LHB) in the pituitary. Regulates the amplitude of the expression rhythms of clock genes: BMAL1, PER2 and NR1D1 in the liver via the activation of PER1 (clock repressor) transcription. Regulates the rhythmic expression of core-clock gene BMAL1 in the suprachiasmatic nucleus (SCN). Regulates biosynthesis of glucocorticoid receptor GR/NR3C1 in the hippocampus and thereby may play a role in the behavioral and hypothalamic-pituitary-adrenal responses to stress in offspring. This chain is Early growth response protein 1 (Egr1), found in Rattus norvegicus (Rat).